Consider the following 400-residue polypeptide: Nicotinate phosphoribosyltransferase (400 aa).

Position 220 is a phosphohistidine; by autocatalysis (H220).

Belongs to the NAPRTase family. Post-translationally, transiently phosphorylated on a His residue during the reaction cycle. Phosphorylation strongly increases the affinity for substrates and increases the rate of nicotinate D-ribonucleotide production. Dephosphorylation regenerates the low-affinity form of the enzyme, leading to product release.

The catalysed reaction is nicotinate + 5-phospho-alpha-D-ribose 1-diphosphate + ATP + H2O = nicotinate beta-D-ribonucleotide + ADP + phosphate + diphosphate. It participates in cofactor biosynthesis; NAD(+) biosynthesis; nicotinate D-ribonucleotide from nicotinate: step 1/1. Functionally, catalyzes the synthesis of beta-nicotinate D-ribonucleotide from nicotinate and 5-phospho-D-ribose 1-phosphate at the expense of ATP. The protein is Nicotinate phosphoribosyltransferase of Escherichia fergusonii (strain ATCC 35469 / DSM 13698 / CCUG 18766 / IAM 14443 / JCM 21226 / LMG 7866 / NBRC 102419 / NCTC 12128 / CDC 0568-73).